Consider the following 230-residue polypeptide: Ribose-5-phosphate isomerase A (230 aa).

Residues 29 to 32 (TGST), 85 to 88 (DGAD), and 99 to 102 (KGAG) each bind substrate. E108 acts as the Proton acceptor in catalysis. K126 serves as a coordination point for substrate.

It belongs to the ribose 5-phosphate isomerase family. As to quaternary structure, homodimer.

The enzyme catalyses aldehydo-D-ribose 5-phosphate = D-ribulose 5-phosphate. It functions in the pathway carbohydrate degradation; pentose phosphate pathway; D-ribose 5-phosphate from D-ribulose 5-phosphate (non-oxidative stage): step 1/1. Its function is as follows. Catalyzes the reversible conversion of ribose-5-phosphate to ribulose 5-phosphate. This chain is Ribose-5-phosphate isomerase A, found in Synechococcus sp. (strain JA-3-3Ab) (Cyanobacteria bacterium Yellowstone A-Prime).